The primary structure comprises 2126 residues: MSDGTAEKQSGTPGFLSPPAPVPKNGSSSDSSVGEKLGAAVADSGIGRTEEYRRRRHTMDKDSRGAAATTTPTEHRFFRRSVICDSNATALELPGLPLSIPQPSVPAVVPQSAPPEPHREETLTATVASQVSQQPSAAASPGEQAVVGSATATVPSSTSKDRPVSQPSLVGSKEEPPPSRSGSGSGGASAKEPQEERNQQQDDIEELETKAVGMSNDGRFLKFDIEIGRGSFKTVYKGLDTETTVEVAWCELQDRKLTKSERQRFKEEAEMLKGLQHPNIVRFYDSWESTVKGKKCIVLVTELMTSGTLKTYLKRFKVMKIKVLRSWCRQILKGLQFLHTRTPPIIHRDLKCDNIFITGPTGSVKIGDLGLATLKRASFAKSVIGTPEFMAPEMYEEKYDESVDVYAFGMCMLEMATSEYPYSECQNAAQIYRRVTSGVKPASFDKVAIPEVKEIIEGCIRQNKDERYSIKDLLNHAFFQEETGVRVELAEEDDGEKIAIKLWLRIEDIKKLKGKYKDNEAIEFSFDLERDVPEDVAQEMVESGYVCEGDHKTMAKAIKDRVSLIKRKREQRQLVREEQEKRKQEESSFKQQNEQQASVSQAGIQPLSVASTGIPTAPTTSASVSTQVEPEEPEADQHQQLQYQQPSISVLSDGTVDSGQGSSVFTESRVSSQQTVSYGSQHEQAHSIGTAPGHTVSSIQAQSQPHGVYPPSSMAQGQNQGQPSSSLAGVLSSQPVQHPQQQGIQPTVPPQQAVQYSLPQAASSSEGTVQPVSQPQVSAGTQSSTQGVSQAAPPEQTPITQSQPTQPVPLVSSVDSAHSDVASGMSDGNENAPSSSGRHEGRTTKRHYRKSVRSRSRHEKTSRPKLRILNVSNKGDRVVECQLETHNRKMVTFKFDLDGDNPEEIATIMVNNDFILAIERESFVAQVREIIEKADEMLSEDVSVEPEGDQGLESLQGKDDYGFPGSQKLEGEFKQPIAVSSMPQQIGVPTSSLTQVVHSAGRRFIVSPVPESRLRESKIFTSEIPDPVAASTSQGPGMNLSHSASSLSLQQAFSELKHGQMTEGPNTAPPNFNHPGPTFSPFLTSIAGVQTVAASTPSVSVPITSSPLNDISTSVMQSEGALPTDKGIGGVTTSTGVVASGGLTTLSVSETPTLSSAVSSSTAPAVVTVSTTSQPVQASTSGSIASSTGSFPSGTFSTTTGTTVSSVAVPNAKPPTVLLQQVAGNTAGVAIVTSVSTTTPFPAMASQPSLPLGSSTSAPTLAETVVVSAHSLDKASHSSTAGLGLSFCAPSSSSSSGTAVSSSVSQPGIVHPLVISSAIASTPVLPQPAVPTSTPLLPQVPNIPPLVQPVANVPAVQQTLIHSQPQPALLPNQPHTHCPEMDADTQSKAPGIDDIKTLEEKLRSLFSEHSSSGTQHASVSLETPLVVETVTPGIPTTAVAPSKLMTSTTSTCLPPTNLPLGTAGMPVMPVGTPGQVSTPGTHASAPASTATGAKPGTTPPKPSLTKTVVPPVGTELSAGTVPCEQLPPFPGPSLIQTQQPLEDLDAQLRRTLSPETIPVTPAVGPLSTMSSTAVTEAGSQPQKDGTEVHVTASSSGAGVVKMGRFQVSVTMDDAQKERKNRSEDTKSVHFESSTSESSVLSSSSPESTLVKPEPNGITVSGISLDVPDSTHRTPTPEAKSETGQPTKVGRFQVTTTANKVGRFSVSRTEDKVTELKKEGPVTSPFRDSEQTVIPAAIPKKEKPELAEPSHLNGPSSDLEAAFLSRGGEDGSGSPHSPPHLCSKSLPIQTLSQSLSNSFNSSYMSSDNESDIEDEDLRLELRRLREKHLKEIQDLQSRQKHEIESLYTKLGKVPPAVIIPPAAPLSGRRRRPTKSKGSKSSRSSSLGNKSPQLSGNLSGQSGTSVLNPQQTLHPPGNTPETGHNQLLQPLKPSPSSDNLYSAFTSDGAISVPSLSAPGQGTSSTNTVGGTVSSQAAQAQPPAMTSSRKGTFTDDLHKLVDNWARDAMNLSGRRGSKGHMNYEGPGMARKFSAPGQLCISMTSNMGGSTPISAASATSLGHFTKSMCPPQQYGFPAAPFGTQWSGTGGPAPQPLGQFQPVGTTSLQNFNISNLQKSISNPPGSNLRTT.

Disordered stretches follow at residues 1–80 and 93–202; these read MSDG…FFRR and LPGL…QQQD. Residue Ser-17 is modified to Phosphoserine. Over residues 48 to 64 the composition is skewed to basic and acidic residues; it reads RTEEYRRRRHTMDKDSR. At Thr-58 the chain carries Phosphothreonine. Low complexity-rich tracts occupy residues 101 to 111 and 127 to 141; these read PQPSVPAVVPQ and VASQ…AASP. Ser-165 and Ser-172 each carry phosphoserine. A Protein kinase domain is found at 221–479; that stretch reads LKFDIEIGRG…IKDLLNHAFF (259 aa). Ser-231 provides a ligand contact to ATP. Chloride is bound by residues Phe-283 and Leu-299. ATP contacts are provided by residues 301–304 and Lys-351; that span reads TELM. Residue Asp-368 is the Proton acceptor of the active site. Residues Leu-369 and Leu-371 each contribute to the chloride site. Phosphoserine; by autocatalysis occurs at positions 378 and 382. The tract at residues 488 to 555 is autoinhibitory domain; sequence ELAEEDDGEK…VCEGDHKTMA (68 aa). The span at 573 to 588 shows a compositional bias: basic and acidic residues; sequence QLVREEQEKRKQEESS. The interval 573–865 is disordered; it reads QLVREEQEKR…SRHEKTSRPK (293 aa). A compositionally biased stretch (polar residues) spans 593–614; it reads NEQQASVSQAGIQPLSVASTGI. The segment covering 615-626 has biased composition (low complexity); sequence PTAPTTSASVST. The interval 629 to 639 is interaction with KLHL3; sequence EPEEPEADQHQ. Composition is skewed to polar residues over residues 638–682, 695–705, and 713–733; these read HQQL…GSQH, TVSSIQAQSQP, and SMAQ…VLSS. Low complexity predominate over residues 734–746; sequence QPVQHPQQQGIQP. The segment covering 750-789 has biased composition (polar residues); it reads PQQAVQYSLPQAASSSEGTVQPVSQPQVSAGTQSSTQGVS. Over residues 793–823 the composition is skewed to low complexity; sequence PPEQTPITQSQPTQPVPLVSSVDSAHSDVAS. Over residues 826–836 the composition is skewed to polar residues; that stretch reads SDGNENAPSSS. Residues 844-865 show a composition bias toward basic residues; it reads TKRHYRKSVRSRSRHEKTSRPK. Residues 1003 to 1006 carry the RFXV motif 1 motif; sequence RFIV. Ser-1007 is subject to Phosphoserine. Disordered stretches follow at residues 1474 to 1507 and 1557 to 1595; these read GQVS…LTKT and IPVT…ASSS. Residues 1477–1496 show a composition bias toward low complexity; that stretch reads STPGTHASAPASTATGAKPG. The segment covering 1567-1583 has biased composition (polar residues); it reads STMSSTAVTEAGSQPQK. The RFXV motif 2 signature appears at 1604 to 1607; the sequence is RFQV. Positions 1610–1695 are disordered; the sequence is TMDDAQKERK…TKVGRFQVTT (86 aa). Over residues 1613–1629 the composition is skewed to basic and acidic residues; the sequence is DAQKERKNRSEDTKSVH. Low complexity predominate over residues 1632–1650; it reads SSTSESSVLSSSSPESTLV. Short sequence motifs (RFXV motif) lie at residues 1690-1693 and 1702-1705; these read RFQV and RFSV. Residues 1709 to 1719 are compositionally biased toward basic and acidic residues; that stretch reads EDKVTELKKEG. Disordered stretches follow at residues 1709–1783, 1856–1940, and 1952–1990; these read EDKV…LCSK, VIIP…NLYS, and SLSA…KGTF. Phosphoserine is present on Ser-1723. The span at 1738–1747 shows a compositional bias: basic and acidic residues; sequence PKKEKPELAE. Phosphoserine occurs at positions 1755, 1756, 1771, 1773, 1776, and 1865. Over residues 1866-1878 the composition is skewed to basic residues; that stretch reads GRRRRPTKSKGSK. Over residues 1879–1889 the composition is skewed to low complexity; the sequence is SSRSSSLGNKS. A compositionally biased stretch (polar residues) spans 1890 to 1940; the sequence is PQLSGNLSGQSGTSVLNPQQTLHPPGNTPETGHNQLLQPLKPSPSSDNLYS. Residues 1957–1981 are compositionally biased toward low complexity; it reads GQGTSSTNTVGGTVSSQAAQAQPPA. The interval 1985–2005 is amphipathic alpha-helix; that stretch reads SRKGTFTDDLHKLVDNWARDA. Phosphoserine occurs at positions 2014 and 2030. Residues 2076 to 2097 form a disordered region; that stretch reads PFGTQWSGTGGPAPQPLGQFQP. Phosphoserine occurs at positions 2114 and 2116.

The protein belongs to the protein kinase superfamily. Ser/Thr protein kinase family. WNK subfamily. In terms of assembly, interacts with WNK3. Interacts with WNK4; inhibiting the activity of WNK4. Interacts with SGK1; promoting its activation. Associates with the mTORC2 complex. Interacts with UVRAG. Interacts (via amphipathic alpha-helix region) with EMC2; promoting the ER membrane protein complex assembly. Interacts with isoform 1; inhibiting isoform 1 activity. The cofactor is Mg(2+). In terms of processing, autophosphorylated at Ser-378 and Ser-382, promoting its activity. Autophosphorylation at Ser-382 is inhibited by intracellular calcium. Phosphorylation at Thr-58 increases ability to activate SGK1. Ubiquitinated by the BCR(KLHL3) complex, leading to its degradation. Also ubiquitinated by the BCR(KLHL2) complex. Post-translationally, may be O-glycosylated.

The protein localises to the cytoplasm. Its subcellular location is the nucleus. The protein resides in the cytoskeleton. It localises to the spindle. The enzyme catalyses L-seryl-[protein] + ATP = O-phospho-L-seryl-[protein] + ADP + H(+). It carries out the reaction L-threonyl-[protein] + ATP = O-phospho-L-threonyl-[protein] + ADP + H(+). With respect to regulation, activated in response to hyperosmotic stress: cell shrinkage promotes formation of a membraneless compartment that concentrates WNK1 with its substrates, OXSR1/OSR1 and STK39/SPAK. Activation requires autophosphorylation of Ser-382 and, to a lower extent, Ser-378. Autophosphorylation and subsequent activation is inhibited by increases in intracellular ionic strength: Cl(-) potently inhibits WNK1 kinase activity via direct binding. Also inhibited by K(+) ions. Inhibited by Compound 12 ((5-Chloro-2-(2-((methyl-d3)amino)thiazol-4-yl)- pyridin-4-yl)(4-(4-chlorobenzyl)piperazin-1-yl)methanone). Functionally, serine/threonine-protein kinase component of the WNK1-SPAK/OSR1 kinase cascade, which acts as a key regulator of blood pressure and regulatory volume increase by promoting ion influx. WNK1 mediates regulatory volume increase in response to hyperosmotic stress by acting as a molecular crowding sensor, which senses cell shrinkage and mediates formation of a membraneless compartment by undergoing liquid-liquid phase separation. The membraneless compartment concentrates WNK1 with its substrates, OXSR1/OSR1 and STK39/SPAK, promoting WNK1-dependent phosphorylation and activation of downstream kinases OXSR1/OSR1 and STK39/SPAK. Following activation, OXSR1/OSR1 and STK39/SPAK catalyze phosphorylation of ion cotransporters SLC12A1/NKCC2, SLC12A2/NKCC1, SLC12A5/KCC2 and SLC12A6/KCC3, regulating their activity. Phosphorylation of Na-K-Cl cotransporters SLC12A2/NKCC1 and SLC12A2/NKCC1 promote their activation and ion influx; simultaneously, phosphorylation of K-Cl cotransporters SLC12A5/KCC2 and SLC12A6/KCC3 inhibit their activity, blocking ion efflux. Also acts as a regulator of angiogenesis in endothelial cells. Also acts independently of the WNK1-SPAK/OSR1 kinase cascade by catalyzing phosphorylation of other substrates, such as SYT2, PCF11 and NEDD4L. Mediates phosphorylation of SYT2, regulating SYT2 association with phospholipids and membrane-binding. Regulates mRNA export in the nucleus by mediating phosphorylation of PCF11, thereby decreasing the association between PCF11 and POLR2A/RNA polymerase II and promoting mRNA export to the cytoplasm. Acts as a negative regulator of autophagy. Required for the abscission step during mitosis, independently of the WNK1-SPAK/OSR1 kinase cascade. WNK1 may also play a role in actin cytoskeletal reorganization. Also acts as a scaffold protein independently of its protein kinase activity: negatively regulates cell membrane localization of various transporters and channels, such as SLC4A4, SLC26A6, SLC26A9, TRPV4 and CFTR. Involved in the regulation of epithelial Na(+) channel (ENaC) by promoting activation of SGK1 in a kinase-independent manner. Probably activates SGK1 by acting as a scaffold protein that promotes the recruitment of SGK1 to the mTORC2 complex in response to chloride, leading to mTORC2-dependent phosphorylation and activation of SGK1. Acts as an assembly factor for the ER membrane protein complex independently of its protein kinase activity: associates with EMC2 in the cytoplasm via its amphipathic alpha-helix, and prevents EMC2 ubiquitination and subsequent degradation, thereby promoting EMC2 stabilization. In terms of biological role, kinase-defective isoform specifically expressed in kidney, which acts as a dominant-negative regulator of the longer isoform 1. Does not directly inhibit WNK4 and has no direct effect on sodium and chloride ion transport. Down-regulates sodium-chloride cotransporter activity indirectly by inhibiting isoform 1, it associates with isoform 1 and attenuates its kinase activity. In kidney, may play an important role regulating sodium and potassium balance. Its function is as follows. Kinase-defective isoform produced by alternative promoter usage and alternative splicing. The chain is Serine/threonine-protein kinase WNK1 from Rattus norvegicus (Rat).